Reading from the N-terminus, the 63-residue chain is Large ribosomal subunit protein bL28 (63 aa).

The protein belongs to the bacterial ribosomal protein bL28 family.

In Heliobacterium modesticaldum (strain ATCC 51547 / Ice1), this protein is Large ribosomal subunit protein bL28.